The following is a 48-amino-acid chain: Large ribosomal subunit protein bL33A (48 aa).

It belongs to the bacterial ribosomal protein bL33 family.

The polypeptide is Large ribosomal subunit protein bL33A (Metamycoplasma arthritidis (strain 158L3-1) (Mycoplasma arthritidis)).